The chain runs to 147 residues: Secreted RxLR effector protein BLN04 (147 aa).

The first 23 residues, 1 to 23 (MATMRRICFLFVFNLAVATSTQG), serve as a signal peptide directing secretion. Residues 58–61 (SEER) carry the dEER motif. Residues 117–137 (VYIYTILFLSIPIILGVAMYI) form a helical membrane-spanning segment.

Belongs to the RxLR effector family. As to quaternary structure, interacts with host transcription factor NAC069.

The protein localises to the secreted. The protein resides in the host membrane. Functionally, secreted effector that inhibits stress-induced relocalization of the transcription factor NAC069 to the nucleus, thus affecting its broad role in abiotic and biotic stress responses. The chain is Secreted RxLR effector protein BLN04 from Bremia lactucae (Lettuce downy mildew).